Here is a 460-residue protein sequence, read N- to C-terminus: MGKEEKTHINLVVIGHVDSGKSTTTGHLIYKCGGIDNRTIEKFEKEAEELGKKSFKYAWVLDKLKAERERGITIDIALWKFETPKYHVTVIDAPGHRDFIKNMITGTSQADCAILIIAAGTGEFEAGISKDGQTREHALLAFTLGVKQLIVAINKMDSTNWSEPRFNEIVKEVSNFIKKVGYNPKAVPFVPISGFEGDNMIQPSTNAPWYKGWNKETASGKHSGKTLLDAIDAIDPPTRPTEKPLRLPLQDVYKISGIGTVPVGRVETGVIKPGMVVTFAPSNVTTEVKSVEMHHQQLTQGNPGDNVGFNVKNVSVKEVRRGNVAGDSKNDPPKGCDSFNAQVIVLNHPGQVGAGYAPVLDCHTAHIACKFSELLEKIDRRTGKSVENNPKFIKSGDAAIVKMVPSKPMCVEAFTDYPPLGRFAVRDMRQTVAVGVIKSVEKSEKTGGKVTKAAQKAAKK.

Gly2 carries the n,N,N-trimethylglycine modification. N6,N6-dimethyllysine; alternate is present on Lys3. Lys3 carries the N6-methyllysine; alternate modification. Residues 6–241 (KTHINLVVIG…DAIDPPTRPT (236 aa)) form the tr-type G domain. Residues 15-22 (GHVDSGKS) are G1. Residue 15–22 (GHVDSGKS) coordinates GTP. Lys31 is modified (N6-methyllysine). Residues 71-75 (GITID) are G2. Lys80 is subject to N6,N6,N6-trimethyllysine. The segment at 92–95 (DAPG) is G3. GTP is bound by residues 92-96 (DAPGH) and 154-157 (NKMD). The G4 stretch occupies residues 154-157 (NKMD). Residues 193 to 195 (SGF) are G5. Lys317 is subject to N6,N6-dimethyllysine; alternate. Lys317 is modified (N6-methyllysine; alternate). Residue Lys391 is modified to N6-methyllysine.

This sequence belongs to the TRAFAC class translation factor GTPase superfamily. Classic translation factor GTPase family. EF-Tu/EF-1A subfamily.

Its subcellular location is the cytoplasm. This protein promotes the GTP-dependent binding of aminoacyl-tRNA to the A-site of ribosomes during protein biosynthesis. This chain is Elongation factor 1-alpha (TEF), found in Coccidioides immitis (strain RS) (Valley fever fungus).